Consider the following 493-residue polypeptide: Cysteine--tRNA ligase (493 aa).

Cys-29 contacts Zn(2+). Positions 31–41 (ATVQSEPHIGH) match the 'HIGH' region motif. Residues Cys-214, His-239, and Glu-243 each contribute to the Zn(2+) site. The 'KMSKS' region motif lies at 270–274 (KMSKS). Lys-273 contributes to the ATP binding site.

The protein belongs to the class-I aminoacyl-tRNA synthetase family. In terms of assembly, monomer. It depends on Zn(2+) as a cofactor.

The protein localises to the cytoplasm. It carries out the reaction tRNA(Cys) + L-cysteine + ATP = L-cysteinyl-tRNA(Cys) + AMP + diphosphate. The sequence is that of Cysteine--tRNA ligase from Renibacterium salmoninarum (strain ATCC 33209 / DSM 20767 / JCM 11484 / NBRC 15589 / NCIMB 2235).